A 128-amino-acid chain; its full sequence is Large ribosomal subunit protein bL19 (128 aa).

Belongs to the bacterial ribosomal protein bL19 family.

Functionally, this protein is located at the 30S-50S ribosomal subunit interface and may play a role in the structure and function of the aminoacyl-tRNA binding site. In Mesoplasma florum (strain ATCC 33453 / NBRC 100688 / NCTC 11704 / L1) (Acholeplasma florum), this protein is Large ribosomal subunit protein bL19.